The primary structure comprises 443 residues: Major royal jelly protein 7 (443 aa).

A signal peptide spans 1-17 (MTRWLFMVACLGIACQG). Asparagine 145, asparagine 161, asparagine 178, and asparagine 321 each carry an N-linked (GlcNAc...) asparagine glycan.

The protein belongs to the major royal jelly protein family. As to expression, found in and secreted from the hypopharyngeal glands of the worker honey bee (at protein level); expression peaks at 12 days post eclosion. Expressed in the brains of adult worker bees peaking at 12 days post eclosion (at protein level). Expressed in the spermatheca of adult queen bees (at protein level); Expression levels are higher in mated queens than in virgin queens.

It is found in the secreted. Functionally, component of royal jelly, a substance produced in the hypopharyngeal gland containing proteins, free amino acids, fatty acids, sugars and other nutrients, which is fed to developing larvae by worker nurse bees. All larvae are fed some royal jelly (also known as worker jelly) early in their development but it forms the principal source of nutrition for larvae destined to become queen bees. Produced in the spermatheca of adult queen bees, along with other major royal jelly proteins, where it may act as a nutrient supply for sperm stored by mated queens, or be involved in energy metabolism. This chain is Major royal jelly protein 7, found in Apis mellifera (Honeybee).